We begin with the raw amino-acid sequence, 82 residues long: Photosystem I iron-sulfur center (82 aa).

4Fe-4S ferredoxin-type domains lie at 2–31 (AHSVKIYDTCIGCTQCVRACPTDVLEMVPW) and 40–69 (IAAAPRTEDCVGCKRCETACPTDFLSIRVY). The [4Fe-4S] cluster site is built by cysteine 11, cysteine 14, cysteine 17, cysteine 21, cysteine 49, cysteine 52, cysteine 55, and cysteine 59.

The cyanobacterial PSI reaction center is composed of one copy each of PsaA,B,C,D,E,F,I,J,K,L,M and X, and forms trimeric complexes. The cofactor is [4Fe-4S] cluster.

The protein resides in the cellular thylakoid membrane. It carries out the reaction reduced [plastocyanin] + hnu + oxidized [2Fe-2S]-[ferredoxin] = oxidized [plastocyanin] + reduced [2Fe-2S]-[ferredoxin]. Functionally, apoprotein for the two 4Fe-4S centers FA and FB of photosystem I (PSI); essential for photochemical activity. FB is the terminal electron acceptor of PSI, donating electrons to ferredoxin. The C-terminus interacts with PsaA/B/D and helps assemble the protein into the PSI complex. Required for binding of PsaD and PsaE to PSI. PSI is a plastocyanin/cytochrome c6-ferredoxin oxidoreductase, converting photonic excitation into a charge separation, which transfers an electron from the donor P700 chlorophyll pair to the spectroscopically characterized acceptors A0, A1, FX, FA and FB in turn. This Synechococcus sp. (strain JA-2-3B'a(2-13)) (Cyanobacteria bacterium Yellowstone B-Prime) protein is Photosystem I iron-sulfur center.